The primary structure comprises 1646 residues: Monensin-resistant homolog 2 (1646 aa).

The protein belongs to the MON2 family.

Its subcellular location is the golgi apparatus. In terms of biological role, may be required for traffic between late Golgi and early endosomes. The polypeptide is Monensin-resistant homolog 2 (mon-2) (Caenorhabditis elegans).